Consider the following 222-residue polypeptide: U-scoloptoxin(11)-Sm5a (222 aa).

The protein belongs to the scoloptoxin-11 family. Post-translationally, contains 8 disulfide bonds. As to expression, expressed by the venom gland.

The protein resides in the secreted. This is U-scoloptoxin(11)-Sm5a from Scolopendra morsitans (Tanzanian blue ringleg centipede).